We begin with the raw amino-acid sequence, 102 residues long: Heat shock protein HspQ (102 aa).

The protein belongs to the HspQ family.

It is found in the cytoplasm. Its function is as follows. Involved in the degradation of certain denaturated proteins, including DnaA, during heat shock stress. The protein is Heat shock protein HspQ of Pectobacterium atrosepticum (strain SCRI 1043 / ATCC BAA-672) (Erwinia carotovora subsp. atroseptica).